The following is a 509-amino-acid chain: 2,3-bisphosphoglycerate-independent phosphoglycerate mutase (509 aa).

Residues Asp13 and Ser63 each contribute to the Mn(2+) site. The Phosphoserine intermediate role is filled by Ser63. Substrate-binding positions include His124, 154 to 155, Arg186, Arg192, 261 to 264, and Lys335; these read RD and RPDR. The Mn(2+) site is built by Asp400, His404, Asp441, His442, and His459.

Belongs to the BPG-independent phosphoglycerate mutase family. Monomer. It depends on Mn(2+) as a cofactor.

The enzyme catalyses (2R)-2-phosphoglycerate = (2R)-3-phosphoglycerate. The protein operates within carbohydrate degradation; glycolysis; pyruvate from D-glyceraldehyde 3-phosphate: step 3/5. Functionally, catalyzes the interconversion of 2-phosphoglycerate and 3-phosphoglycerate. This is 2,3-bisphosphoglycerate-independent phosphoglycerate mutase from Desulforudis audaxviator (strain MP104C).